The sequence spans 200 residues: Glycerol-3-phosphate acyltransferase (200 aa).

6 helical membrane-spanning segments follow: residues 9-29 (IIIG…AYFW), 54-74 (VPGM…VLLA), 81-101 (DIAV…PLWL), 112-132 (GAGA…LVWL), 140-160 (YVSL…ALLN), and 165-185 (YLIF…SNIG).

The protein belongs to the PlsY family. In terms of assembly, probably interacts with PlsX.

The protein resides in the cell membrane. The catalysed reaction is an acyl phosphate + sn-glycerol 3-phosphate = a 1-acyl-sn-glycero-3-phosphate + phosphate. It functions in the pathway lipid metabolism; phospholipid metabolism. Catalyzes the transfer of an acyl group from acyl-phosphate (acyl-PO(4)) to glycerol-3-phosphate (G3P) to form lysophosphatidic acid (LPA). This enzyme utilizes acyl-phosphate as fatty acyl donor, but not acyl-CoA or acyl-ACP. This chain is Glycerol-3-phosphate acyltransferase, found in Desulforamulus reducens (strain ATCC BAA-1160 / DSM 100696 / MI-1) (Desulfotomaculum reducens).